The sequence spans 1179 residues: DNA-directed RNA polymerase subunit beta' (1179 aa).

4 residues coordinate Zn(2+): Cys60, Cys62, Cys75, and Cys78. Asp449, Asp451, and Asp453 together coordinate Mg(2+). Zn(2+) contacts are provided by Cys796, Cys871, Cys878, and Cys881.

The protein belongs to the RNA polymerase beta' chain family. In terms of assembly, the RNAP catalytic core consists of 2 alpha, 1 beta, 1 beta' and 1 omega subunit. When a sigma factor is associated with the core the holoenzyme is formed, which can initiate transcription. Requires Mg(2+) as cofactor. The cofactor is Zn(2+).

The enzyme catalyses RNA(n) + a ribonucleoside 5'-triphosphate = RNA(n+1) + diphosphate. Its function is as follows. DNA-dependent RNA polymerase catalyzes the transcription of DNA into RNA using the four ribonucleoside triphosphates as substrates. This Symbiobacterium thermophilum (strain DSM 24528 / JCM 14929 / IAM 14863 / T) protein is DNA-directed RNA polymerase subunit beta'.